The primary structure comprises 831 residues: Prickle-like protein 1 (831 aa).

A PET domain is found at 14–122 (FGCQRSSTSD…TIKLLSRAVM (109 aa)). LIM zinc-binding domains are found at residues 124–189 (AVCE…LLKP), 189–249 (PRCS…LYAE), and 249–313 (EYCE…EDVH). Residues 313 to 342 (HASDSSDSAFQSARSRDSRRSVRMGKSSRS) form a disordered region. Phosphoserine occurs at positions 315, 591, and 594. 2 disordered regions span residues 663-688 (FEERGSRSHHHRRRRSRKSRSDNALN) and 763-831 (CSSS…CIIS). The span at 669 to 680 (RSHHHRRRRSRK) shows a compositional bias: basic residues. Ser683 is modified (phosphoserine). Basic residues predominate over residues 815–831 (TKSKKKKGHKGKNCIIS). At Cys828 the chain carries Cysteine methyl ester. Cys828 carries S-farnesyl cysteine lipidation. Residues 829-831 (IIS) constitute a propeptide, removed in mature form.

The protein belongs to the prickle / espinas / testin family. In terms of assembly, interacts with REST. In terms of tissue distribution, expressed at highest levels in placenta and at lower levels in lung, liver, kidney and pancreas. Expressed in thalamus, hippocampus, cerebral cortex, and cerebellum (in neurons rather than glia).

The protein resides in the nucleus membrane. It localises to the cytoplasm. The protein localises to the cytosol. In terms of biological role, involved in the planar cell polarity pathway that controls convergent extension during gastrulation and neural tube closure. Convergent extension is a complex morphogenetic process during which cells elongate, move mediolaterally, and intercalate between neighboring cells, leading to convergence toward the mediolateral axis and extension along the anteroposterior axis. Necessary for nuclear localization of REST. May serve as nuclear receptor. The polypeptide is Prickle-like protein 1 (PRICKLE1) (Homo sapiens (Human)).